We begin with the raw amino-acid sequence, 346 residues long: Flap endonuclease 1 (346 aa).

An N-domain region spans residues 1 to 102 (MGVTELGKLI…LEIEQRKKAK (102 aa)). Asp31, Asp84, Glu156, Glu158, Asp177, Asp179, and Asp239 together coordinate Mg(2+). Residues 120–261 (DVAKYAKRAI…KALKLIWEFG (142 aa)) are I-domain.

It belongs to the XPG/RAD2 endonuclease family. FEN1 subfamily. Interacts with PCNA. PCNA stimulates the nuclease activity without altering cleavage specificity. Mg(2+) serves as cofactor.

Functionally, structure-specific nuclease with 5'-flap endonuclease and 5'-3' exonuclease activities involved in DNA replication and repair. During DNA replication, cleaves the 5'-overhanging flap structure that is generated by displacement synthesis when DNA polymerase encounters the 5'-end of a downstream Okazaki fragment. Binds the unpaired 3'-DNA end and kinks the DNA to facilitate 5' cleavage specificity. Cleaves one nucleotide into the double-stranded DNA from the junction in flap DNA, leaving a nick for ligation. Also involved in the base excision repair (BER) pathway. Acts as a genome stabilization factor that prevents flaps from equilibrating into structures that lead to duplications and deletions. Also possesses 5'-3' exonuclease activity on nicked or gapped double-stranded DNA. This Pyrobaculum calidifontis (strain DSM 21063 / JCM 11548 / VA1) protein is Flap endonuclease 1.